The chain runs to 50 residues: Insulin 2 (50 aa).

Disulfide bonds link Cys8–Cys36, Cys20–Cys49, and Cys35–Cys40.

Belongs to the insulin family. In terms of assembly, heterodimer of a B chain and an A chain linked by two disulfide bonds.

Its subcellular location is the secreted. In terms of biological role, insulin decreases blood glucose concentration. It increases cell permeability to monosaccharides, amino acids and fatty acids. It accelerates glycolysis, the pentose phosphate cycle, and glycogen synthesis in liver. The chain is Insulin 2 (ins2) from Batrachoididae sp. (Toadfish).